Consider the following 313-residue polypeptide: tRNA dimethylallyltransferase (313 aa).

10-17 is a binding site for ATP; that stretch reads GPTASGKT. Position 12–17 (12–17) interacts with substrate; the sequence is TASGKT. 3 interaction with substrate tRNA regions span residues 35 to 38, 159 to 163, and 240 to 245; these read DSAM, QRIQR, and RCVGYR.

Belongs to the IPP transferase family. In terms of assembly, monomer. The cofactor is Mg(2+).

It carries out the reaction adenosine(37) in tRNA + dimethylallyl diphosphate = N(6)-dimethylallyladenosine(37) in tRNA + diphosphate. Functionally, catalyzes the transfer of a dimethylallyl group onto the adenine at position 37 in tRNAs that read codons beginning with uridine, leading to the formation of N6-(dimethylallyl)adenosine (i(6)A). The sequence is that of tRNA dimethylallyltransferase from Legionella pneumophila (strain Paris).